Here is a 124-residue protein sequence, read N- to C-terminus: CBS domain-containing protein MJ0729 (124 aa).

CBS domains are found at residues M10–L67 and L70–R124.

Exhibits a pH-dependent oligomerization state: at pH 7, the dominant species is a dimer, where each monomer is a two-CBS domain protein, and at pH 4.5-4.8, the dominant species is a tetramer, with an oblong shape. At pH 2.5, there is formation of intermolecular hydrogen bonds, suggesting the presence of high-molecular weight species. The physiological dimeric species is thermal and chemically very stable.

This chain is CBS domain-containing protein MJ0729, found in Methanocaldococcus jannaschii (strain ATCC 43067 / DSM 2661 / JAL-1 / JCM 10045 / NBRC 100440) (Methanococcus jannaschii).